We begin with the raw amino-acid sequence, 224 residues long: Acyl-protein thioesterase 1 (224 aa).

Catalysis depends on charge relay system residues Ser-116, Asp-170, and His-203.

This sequence belongs to the AB hydrolase superfamily. AB hydrolase 2 family.

It localises to the cytoplasm. It is found in the nucleus. It catalyses the reaction S-hexadecanoyl-L-cysteinyl-[protein] + H2O = L-cysteinyl-[protein] + hexadecanoate + H(+). Hydrolyzes fatty acids from S-acylated cysteine residues in proteins with a strong preference for palmitoylated G-alpha proteins over other acyl substrates. Mediates the deacylation of G-alpha proteins such as GPA1 in vivo, but has weak or no activity toward palmitoylated Ras proteins. Has weak lysophospholipase activity in vitro; however such activity may not exist in vivo. This Schizosaccharomyces pombe (strain 972 / ATCC 24843) (Fission yeast) protein is Acyl-protein thioesterase 1.